The chain runs to 231 residues: MIKDERWEGVYSFEDSPYLMETLTDLRKISTENISFRKGLVRLGRYMGYELTKTMEFEKMPIQTPLEKTEGIFSKDRKNVVIITILRAAFPLMEGLIKNFESAKVGIVSASRGHAPDFKIEMNYIKVPQLNSEDTVIISDPMIATGSTLIRVLNEFKDSKPKRMLIVGVLAAPEGINAVKAEFPDVEIFVTKIDEKLNKDGYIVPGLGDAGDRAFGEPYKVSMLPQMHNLE.

A GTP-binding site is contributed by 38–42 (KGLVR). Residues arginine 87, arginine 112, and 140-148 (DPMIATGST) each bind 5-phospho-alpha-D-ribose 1-diphosphate. Residues isoleucine 203 and 208–210 (GDA) each bind uracil. Aspartate 209 lines the 5-phospho-alpha-D-ribose 1-diphosphate pocket.

The protein belongs to the UPRTase family. Mg(2+) serves as cofactor.

It catalyses the reaction UMP + diphosphate = 5-phospho-alpha-D-ribose 1-diphosphate + uracil. It participates in pyrimidine metabolism; UMP biosynthesis via salvage pathway; UMP from uracil: step 1/1. With respect to regulation, allosterically activated by GTP. Its function is as follows. Catalyzes the conversion of uracil and 5-phospho-alpha-D-ribose 1-diphosphate (PRPP) to UMP and diphosphate. This is Uracil phosphoribosyltransferase from Methanococcus maripaludis (strain C7 / ATCC BAA-1331).